The following is a 287-amino-acid chain: 4-hydroxybenzoate octaprenyltransferase (287 aa).

6 consecutive transmembrane segments (helical) span residues 41 to 61 (VSLLVIFALGTILMRSAGCAI), 92 to 112 (VALAAGLSLVAFLLILPLNAL), 133 to 153 (FFAIPQAYLGIAFGFGIPMAF), 160 to 180 (VPLLAWVMLIANVFWSVAYDT), 197 to 217 (TSALTFGRFDVLAIMLCYAVT), and 267 to 287 (NNWLGGALFAGIAAHYAAQAF).

The protein belongs to the UbiA prenyltransferase family. It depends on Mg(2+) as a cofactor.

The protein resides in the cell inner membrane. The enzyme catalyses all-trans-octaprenyl diphosphate + 4-hydroxybenzoate = 4-hydroxy-3-(all-trans-octaprenyl)benzoate + diphosphate. Its pathway is cofactor biosynthesis; ubiquinone biosynthesis. Its function is as follows. Catalyzes the prenylation of para-hydroxybenzoate (PHB) with an all-trans polyprenyl group. Mediates the second step in the final reaction sequence of ubiquinone-8 (UQ-8) biosynthesis, which is the condensation of the polyisoprenoid side chain with PHB, generating the first membrane-bound Q intermediate 3-octaprenyl-4-hydroxybenzoate. The chain is 4-hydroxybenzoate octaprenyltransferase from Paraburkholderia phymatum (strain DSM 17167 / CIP 108236 / LMG 21445 / STM815) (Burkholderia phymatum).